A 226-amino-acid polypeptide reads, in one-letter code: ATP-dependent dethiobiotin synthetase BioD (226 aa).

13 to 18 (DVGKTL) lines the ATP pocket. Thr17 provides a ligand contact to Mg(2+). Residue Lys38 is part of the active site. ATP is bound by residues Asp55, 117–120 (EGAG), 177–178 (NR), 206–208 (PFV), and Glu213. Residues Asp55 and Glu117 each coordinate Mg(2+).

This sequence belongs to the dethiobiotin synthetase family. As to quaternary structure, homodimer. Mg(2+) is required as a cofactor.

It is found in the cytoplasm. It carries out the reaction (7R,8S)-7,8-diammoniononanoate + CO2 + ATP = (4R,5S)-dethiobiotin + ADP + phosphate + 3 H(+). It participates in cofactor biosynthesis; biotin biosynthesis; biotin from 7,8-diaminononanoate: step 1/2. Catalyzes a mechanistically unusual reaction, the ATP-dependent insertion of CO2 between the N7 and N8 nitrogen atoms of 7,8-diaminopelargonic acid (DAPA, also called 7,8-diammoniononanoate) to form a ureido ring. The polypeptide is ATP-dependent dethiobiotin synthetase BioD (Aeromonas hydrophila subsp. hydrophila (strain ATCC 7966 / DSM 30187 / BCRC 13018 / CCUG 14551 / JCM 1027 / KCTC 2358 / NCIMB 9240 / NCTC 8049)).